We begin with the raw amino-acid sequence, 92 residues long: DNA-directed RNA polymerase subunit Rpo11 (92 aa).

It belongs to the archaeal Rpo11/eukaryotic RPB11/RPC19 RNA polymerase subunit family. Part of the RNA polymerase complex.

Its subcellular location is the cytoplasm. The enzyme catalyses RNA(n) + a ribonucleoside 5'-triphosphate = RNA(n+1) + diphosphate. Its function is as follows. DNA-dependent RNA polymerase (RNAP) catalyzes the transcription of DNA into RNA using the four ribonucleoside triphosphates as substrates. This chain is DNA-directed RNA polymerase subunit Rpo11, found in Methanosarcina mazei (strain ATCC BAA-159 / DSM 3647 / Goe1 / Go1 / JCM 11833 / OCM 88) (Methanosarcina frisia).